The following is a 143-amino-acid chain: High mobility group protein B (143 aa).

Positions 1–22 are disordered; sequence MSKAASQYATLEDLPSKPKRPQ. The HMG box DNA-binding region spans 18–86; the sequence is PKRPQTGFFI…TYDKQNDQWK (69 aa). A Blocked amino end (Ala) modification is found at Ala70. Composition is skewed to basic and acidic residues over residues 100–120 and 131–143; these read AKKA…ELEK and AKKD…AKKK. The segment at 100-143 is disordered; it reads AKKALKEKTKKSKAAEKELEKSKKKAPAAAPAKKDDKKAPAKKK.

The protein resides in the nucleus. It localises to the chromosome. The protein is High mobility group protein B of Tetrahymena thermophila.